Here is a 430-residue protein sequence, read N- to C-terminus: Replication protein A 32 kDa subunit C (430 aa).

The disordered stretch occupies residues 14–46; that stretch reads MPSQRSGAPAPEYSAAGTGAAAAPSPSKPRDPR. A compositionally biased stretch (low complexity) spans 23-38; that stretch reads APEYSAAGTGAAAAPS. A DNA-binding region (OB) is located at residues 86-160; sequence VRVLGRVVSV…QGLARSIRPI (75 aa).

The protein belongs to the replication factor A protein 2 family. As to quaternary structure, heterotrimer of RPA1, RPA2 and RPA3 (canonical replication protein A complex). Interacts with RPA1C and RPA3. Phosphorylated in a cell-cycle-dependent manner (from the S phase until mitosis). In response to DNA damage, recruited to DNA-repair nuclear foci, as a hypophosphorylated form.

It localises to the nucleus. Its function is as follows. Component of the replication protein A complex (RPA) required for DNA recombination, repair and replication. The activity of RPA is mediated by single-stranded DNA binding and protein interactions. This is Replication protein A 32 kDa subunit C (RPA2C) from Oryza sativa subsp. japonica (Rice).